Consider the following 421-residue polypeptide: Osmoprotective compounds-binding protein GgtB (421 aa).

Residues 1-18 (MKFFKITTLIISLIVLTS) form the signal peptide. C19 is lipidated: N-palmitoyl cysteine. A lipid anchor (S-diacylglycerol cysteine) is attached at C19.

This sequence belongs to the bacterial solute-binding protein 1 family. In terms of assembly, the complex is composed of two ATP-binding proteins (GgtA), two transmembrane proteins (GgtC and GgtD) and a solute-binding protein (GgtB).

The protein localises to the cell membrane. Part of the ABC transporter complex GgtABCD involved in the uptake of the osmoprotective compounds glucosylglycerol (GG), sucrose and trehalose. Binds glucosylglycerol and exhibits a somewhat lower affinity towards sucrose and a substantially lower affinity towards trehalose. The sequence is that of Osmoprotective compounds-binding protein GgtB from Synechocystis sp. (strain ATCC 27184 / PCC 6803 / Kazusa).